Reading from the N-terminus, the 245-residue chain is UPF0328 protein ECU09_2010 (245 aa).

Belongs to the UPF0328 family.

The chain is UPF0328 protein ECU09_2010 from Encephalitozoon cuniculi (strain GB-M1) (Microsporidian parasite).